Here is a 299-residue protein sequence, read N- to C-terminus: tRNA dimethylallyltransferase (299 aa).

ATP is bound at residue 11-18 (GPTAVGKT). 13-18 (TAVGKT) contacts substrate. Residues 36–39 (DSQQ) form an interaction with substrate tRNA region.

Belongs to the IPP transferase family. Monomer. Mg(2+) serves as cofactor.

The catalysed reaction is adenosine(37) in tRNA + dimethylallyl diphosphate = N(6)-dimethylallyladenosine(37) in tRNA + diphosphate. In terms of biological role, catalyzes the transfer of a dimethylallyl group onto the adenine at position 37 in tRNAs that read codons beginning with uridine, leading to the formation of N6-(dimethylallyl)adenosine (i(6)A). The sequence is that of tRNA dimethylallyltransferase from Streptococcus pyogenes serotype M4 (strain MGAS10750).